The sequence spans 74 residues: Cytochrome c oxidase subunit 6C (74 aa).

Over 2–12 (STALAKPQMRG) the chain is Mitochondrial matrix. A helical transmembrane segment spans residues 13-53 (LLARRLRFHIVGAFMVSLGFATFYKFAVAEKRKKAYADFYR). Residues 54–74 (NYDSMKDFEEMRKAGIFQSAK) are Mitochondrial intermembrane-facing.

The protein belongs to the cytochrome c oxidase subunit 6c family. Component of the cytochrome c oxidase (complex IV, CIV), a multisubunit enzyme composed of 14 subunits. The complex is composed of a catalytic core of 3 subunits MT-CO1, MT-CO2 and MT-CO3, encoded in the mitochondrial DNA, and 11 supernumerary subunits COX4I1 (or COX4I2), COX5A, COX5B, COX6A2 (or COX6A1), COX6B1 (or COX6B2), COX6C, COX7A1 (or COX7A2), COX7B, COX7C, COX8B and NDUFA4, which are encoded in the nuclear genome. The complex exists as a monomer or a dimer and forms supercomplexes (SCs) in the inner mitochondrial membrane with NADH-ubiquinone oxidoreductase (complex I, CI) and ubiquinol-cytochrome c oxidoreductase (cytochrome b-c1 complex, complex III, CIII), resulting in different assemblies (supercomplex SCI(1)III(2)IV(1) and megacomplex MCI(2)III(2)IV(2)).

It is found in the mitochondrion inner membrane. It participates in energy metabolism; oxidative phosphorylation. Component of the cytochrome c oxidase, the last enzyme in the mitochondrial electron transport chain which drives oxidative phosphorylation. The respiratory chain contains 3 multisubunit complexes succinate dehydrogenase (complex II, CII), ubiquinol-cytochrome c oxidoreductase (cytochrome b-c1 complex, complex III, CIII) and cytochrome c oxidase (complex IV, CIV), that cooperate to transfer electrons derived from NADH and succinate to molecular oxygen, creating an electrochemical gradient over the inner membrane that drives transmembrane transport and the ATP synthase. Cytochrome c oxidase is the component of the respiratory chain that catalyzes the reduction of oxygen to water. Electrons originating from reduced cytochrome c in the intermembrane space (IMS) are transferred via the dinuclear copper A center (CU(A)) of subunit 2 and heme A of subunit 1 to the active site in subunit 1, a binuclear center (BNC) formed by heme A3 and copper B (CU(B)). The BNC reduces molecular oxygen to 2 water molecules using 4 electrons from cytochrome c in the IMS and 4 protons from the mitochondrial matrix. The chain is Cytochrome c oxidase subunit 6C (COX6C) from Bos taurus (Bovine).